A 382-amino-acid chain; its full sequence is 1-deoxy-D-xylulose 5-phosphate reductoisomerase (382 aa).

NADPH contacts are provided by threonine 10, glycine 11, serine 12, isoleucine 13, glycine 36, and asparagine 122. Lysine 123 is a binding site for 1-deoxy-D-xylulose 5-phosphate. Glutamate 124 is a binding site for NADPH. A Mn(2+)-binding site is contributed by aspartate 148. 1-deoxy-D-xylulose 5-phosphate is bound by residues serine 149, glutamate 150, serine 174, and histidine 197. Glutamate 150 serves as a coordination point for Mn(2+). An NADPH-binding site is contributed by glycine 203. Residues serine 210, asparagine 215, lysine 216, and glutamate 219 each coordinate 1-deoxy-D-xylulose 5-phosphate. Residue glutamate 219 coordinates Mn(2+).

This sequence belongs to the DXR family. Mg(2+) serves as cofactor. The cofactor is Mn(2+).

The enzyme catalyses 2-C-methyl-D-erythritol 4-phosphate + NADP(+) = 1-deoxy-D-xylulose 5-phosphate + NADPH + H(+). It functions in the pathway isoprenoid biosynthesis; isopentenyl diphosphate biosynthesis via DXP pathway; isopentenyl diphosphate from 1-deoxy-D-xylulose 5-phosphate: step 1/6. Functionally, catalyzes the NADPH-dependent rearrangement and reduction of 1-deoxy-D-xylulose-5-phosphate (DXP) to 2-C-methyl-D-erythritol 4-phosphate (MEP). The protein is 1-deoxy-D-xylulose 5-phosphate reductoisomerase of Chlorobium phaeobacteroides (strain BS1).